The chain runs to 204 residues: Calexcitin-1 (204 aa).

3 consecutive EF-hand domains span residues 25–61 (FLVK…VRDI), 75–110 (SLAA…TDAK), and 115–150 (WFKD…YGFD). Residues D39, N41, S43, Q45, D50, D88, D90, D92, E99, D128, S130, D132, and E139 each coordinate Ca(2+).

This is Calexcitin-1 (cex-1) from Caenorhabditis elegans.